Consider the following 227-residue polypeptide: MAYPFQLGLQDATSPIMEELANFHDHTLMIVFLISSLVLYIISSMLTTKLTHTSTMDAQEVETIWTILPAVILILIALPSLRILYMMDEINNPALTVKTMGHQWYWSYEYTDYEDLCFDSYMVPTNDLKPGDLRLLEVDNRVVLPMELPIRMLISSEDVLHSWAVPSLGLKTDAIPGRLNQATVTSNRPGLFYGQCSEICGSNHSFMPIVLEMVPLKHFENWSASMI.

Topologically, residues 1–14 are mitochondrial intermembrane; the sequence is MAYPFQLGLQDATS. A helical transmembrane segment spans residues 15-45; that stretch reads PIMEELANFHDHTLMIVFLISSLVLYIISSM. The Mitochondrial matrix segment spans residues 46 to 59; that stretch reads LTTKLTHTSTMDAQ. The helical transmembrane segment at 60-87 threads the bilayer; it reads EVETIWTILPAVILILIALPSLRILYMM. Residues 88–227 are Mitochondrial intermembrane-facing; the sequence is DEINNPALTV…HFENWSASMI (140 aa). Positions 161, 196, 198, 200, 204, and 207 each coordinate Cu cation. Mg(2+) is bound at residue glutamate 198.

The protein belongs to the cytochrome c oxidase subunit 2 family. As to quaternary structure, component of the cytochrome c oxidase (complex IV, CIV), a multisubunit enzyme composed of 14 subunits. The complex is composed of a catalytic core of 3 subunits MT-CO1, MT-CO2 and MT-CO3, encoded in the mitochondrial DNA, and 11 supernumerary subunits COX4I, COX5A, COX5B, COX6A, COX6B, COX6C, COX7A, COX7B, COX7C, COX8 and NDUFA4, which are encoded in the nuclear genome. The complex exists as a monomer or a dimer and forms supercomplexes (SCs) in the inner mitochondrial membrane with NADH-ubiquinone oxidoreductase (complex I, CI) and ubiquinol-cytochrome c oxidoreductase (cytochrome b-c1 complex, complex III, CIII), resulting in different assemblies (supercomplex SCI(1)III(2)IV(1) and megacomplex MCI(2)III(2)IV(2)). Found in a complex with TMEM177, COA6, COX18, COX20, SCO1 and SCO2. Interacts with TMEM177 in a COX20-dependent manner. Interacts with COX20. Interacts with COX16. Cu cation serves as cofactor.

The protein localises to the mitochondrion inner membrane. It catalyses the reaction 4 Fe(II)-[cytochrome c] + O2 + 8 H(+)(in) = 4 Fe(III)-[cytochrome c] + 2 H2O + 4 H(+)(out). In terms of biological role, component of the cytochrome c oxidase, the last enzyme in the mitochondrial electron transport chain which drives oxidative phosphorylation. The respiratory chain contains 3 multisubunit complexes succinate dehydrogenase (complex II, CII), ubiquinol-cytochrome c oxidoreductase (cytochrome b-c1 complex, complex III, CIII) and cytochrome c oxidase (complex IV, CIV), that cooperate to transfer electrons derived from NADH and succinate to molecular oxygen, creating an electrochemical gradient over the inner membrane that drives transmembrane transport and the ATP synthase. Cytochrome c oxidase is the component of the respiratory chain that catalyzes the reduction of oxygen to water. Electrons originating from reduced cytochrome c in the intermembrane space (IMS) are transferred via the dinuclear copper A center (CU(A)) of subunit 2 and heme A of subunit 1 to the active site in subunit 1, a binuclear center (BNC) formed by heme A3 and copper B (CU(B)). The BNC reduces molecular oxygen to 2 water molecules using 4 electrons from cytochrome c in the IMS and 4 protons from the mitochondrial matrix. The polypeptide is Cytochrome c oxidase subunit 2 (MT-CO2) (Malacomys longipes (Big-eared swamp rat)).